The sequence spans 166 residues: MSDRVCVGAVAGAFGVRGELRIKSFCAVPEDIASYNPLSFEDGRETTLRLTGQIKNGLSGRLTGVSNKEAADALRGARLYAPRDRLPRLPDDEFYHADLIGLAVHDTGGTLLGKVAAVHNHGAGDLLELRGPGLKGSVLLPFTRAVVPTVDLDAGRIVADPPEGLF.

The region spanning 91–165 (DDEFYHADLI…RIVADPPEGL (75 aa)) is the PRC barrel domain.

It belongs to the RimM family. As to quaternary structure, binds ribosomal protein uS19.

The protein localises to the cytoplasm. Functionally, an accessory protein needed during the final step in the assembly of 30S ribosomal subunit, possibly for assembly of the head region. Essential for efficient processing of 16S rRNA. May be needed both before and after RbfA during the maturation of 16S rRNA. It has affinity for free ribosomal 30S subunits but not for 70S ribosomes. The sequence is that of Ribosome maturation factor RimM from Dinoroseobacter shibae (strain DSM 16493 / NCIMB 14021 / DFL 12).